The following is a 148-amino-acid chain: Sec-independent protein translocase protein TatB (148 aa).

Residues 1–21 (MFDIGFWELVVIGIVALVVLG) traverse the membrane as a helical segment.

Belongs to the TatB family. As to quaternary structure, the Tat system comprises two distinct complexes: a TatABC complex, containing multiple copies of TatA, TatB and TatC subunits, and a separate TatA complex, containing only TatA subunits. Substrates initially bind to the TatABC complex, which probably triggers association of the separate TatA complex to form the active translocon.

The protein localises to the cell inner membrane. In terms of biological role, part of the twin-arginine translocation (Tat) system that transports large folded proteins containing a characteristic twin-arginine motif in their signal peptide across membranes. Together with TatC, TatB is part of a receptor directly interacting with Tat signal peptides. TatB may form an oligomeric binding site that transiently accommodates folded Tat precursor proteins before their translocation. In Aeromonas salmonicida (strain A449), this protein is Sec-independent protein translocase protein TatB.